The following is a 237-amino-acid chain: Lectin alpha chain (237 aa).

Residues Glu8 and Asp10 each coordinate Mn(2+). Ca(2+) contacts are provided by Asp10, Tyr12, Asn14, and Asp19. Tyr12 serves as a coordination point for a carbohydrate. The Mn(2+) site is built by Asp19, His24, and Ser34. Residue 99–100 coordinates a carbohydrate; it reads LY. Residue Asp208 participates in Ca(2+) binding. Arg228 contributes to the a carbohydrate binding site.

This sequence belongs to the leguminous lectin family. In terms of assembly, equilibrium between homodimer and homotetramer. Oligomerization is pH-dependent with homotetramers forming at pH 6.5 and above. In terms of processing, the beta and gamma chains are produced by partial proteolytic processing of the lectin alpha chain by an asparaginyl endopeptidase. Mixture of 60% alpha lectin and 40% of its beta and gamma proteolytic fragments.

Functionally, D-mannose/D-glucose-binding lectin. Has anti-inflammatory activity in rats. Induces histamine release in mast cells from rat. Induces lymphocyte proliferation and IFNG production. This is Lectin alpha chain from Dioclea guianensis.